A 545-amino-acid polypeptide reads, in one-letter code: MSGAAVFVDAVVAPLGDAVGAIGFGAAAALGYRNYRDTDAEAAFWMAFTFASLLGVTWTVSLMLEKAGVATQIFNLATGPLMATTVAVFAIGGTATLAIVEDMEALVEERAQRRQEAEEERAEAERAREKAEQKQAEAERQTAEAESAKQDARERSAEIEQLAADLESQATEVGATLEAASDGDLTARVDATTDNAEIAEVATVVNDMLTTMERTIDEIQGFSTNVTTASREATAGAKEIQDASQTVSESVQEIAAGTDDQREQLESVAEEMDSYSATVEEVAATAQSVADTAADTTDVATAGKQTAEDAIDAIDAVQETMQTTVANVDALEDLTTEIDDIAELISDIAEQTNMLALNANIEAARAGSGGGSNGDGFAVVADEVKELATESQRSAKDIAELIEEVQSQTATTVEEIRVAEQRVNDGAAAVEETVDAFGAVTENIQETTDGVQEISQAMDEQAQRSERVVSSVDDIATISQATADRAENVSAASEEQTASITEVTSSLQSLAAQADTLEDRLNEFRTEATGTAHGEATDAPAGQSD.

Transmembrane regions (helical) follow at residues 10–30, 44–64, and 80–100; these read AVVA…AAAL, FWMA…SLML, and PLMA…LAIV. Positions 111–157 are disordered; that stretch reads AQRRQEAEEERAEAERAREKAEQKQAEAERQTAEAESAKQDARERSA. The span at 123–157 shows a compositional bias: basic and acidic residues; it reads EAERAREKAEQKQAEAERQTAEAESAKQDARERSA. Positions 164–217 constitute an HAMP domain; the sequence is ADLESQATEVGATLEAASDGDLTARVDATTDNAEIAEVATVVNDMLTTMERTID. The Methyl-accepting transducer domain occupies 236–476; sequence GAKEIQDASQ…RVVSSVDDIA (241 aa). Glu-281 carries the glutamate methyl ester (Glu) modification. The interval 521-545 is disordered; sequence LNEFRTEATGTAHGEATDAPAGQSD. Residues 527–539 show a composition bias toward low complexity; it reads EATGTAHGEATDA.

The protein belongs to the methyl-accepting chemotaxis (MCP) protein family. In terms of processing, methylated by CheR.

It is found in the cell membrane. Functionally, potentially involved in chemo- or phototactic signal transduction. This Halobacterium salinarum (strain ATCC 29341 / DSM 671 / R1) protein is Transducer protein Htr7 (htr7).